A 271-amino-acid polypeptide reads, in one-letter code: Tryptophan synthase alpha chain (271 aa).

Residues Glu-53 and Asp-64 each act as proton acceptor in the active site.

Belongs to the TrpA family. In terms of assembly, tetramer of two alpha and two beta chains.

The catalysed reaction is (1S,2R)-1-C-(indol-3-yl)glycerol 3-phosphate + L-serine = D-glyceraldehyde 3-phosphate + L-tryptophan + H2O. The protein operates within amino-acid biosynthesis; L-tryptophan biosynthesis; L-tryptophan from chorismate: step 5/5. Functionally, the alpha subunit is responsible for the aldol cleavage of indoleglycerol phosphate to indole and glyceraldehyde 3-phosphate. This is Tryptophan synthase alpha chain from Streptomyces coelicolor (strain ATCC BAA-471 / A3(2) / M145).